Here is an 861-residue protein sequence, read N- to C-terminus: Bifunctional uridylyltransferase/uridylyl-removing enzyme (861 aa).

Positions 1–321 (MKNDNRIIKN…VYHQKQKIIR (321 aa)) are uridylyltransferase. Residues 322–678 (LDDEFQLSNR…IMPHHSQGGT (357 aa)) are uridylyl-removing. The 123-residue stretch at 440-562 (VDQHTLFVIR…LPHARYLDYL (123 aa)) folds into the HD domain. ACT domains follow at residues 679–760 (EVFI…AVSR) and 788–861 (QLFL…KSKY).

This sequence belongs to the GlnD family. Requires Mg(2+) as cofactor.

It catalyses the reaction [protein-PII]-L-tyrosine + UTP = [protein-PII]-uridylyl-L-tyrosine + diphosphate. The enzyme catalyses [protein-PII]-uridylyl-L-tyrosine + H2O = [protein-PII]-L-tyrosine + UMP + H(+). Its activity is regulated as follows. Uridylyltransferase (UTase) activity is inhibited by glutamine, while glutamine activates uridylyl-removing (UR) activity. Modifies, by uridylylation and deuridylylation, the PII regulatory proteins (GlnB and homologs), in response to the nitrogen status of the cell that GlnD senses through the glutamine level. Under low glutamine levels, catalyzes the conversion of the PII proteins and UTP to PII-UMP and PPi, while under higher glutamine levels, GlnD hydrolyzes PII-UMP to PII and UMP (deuridylylation). Thus, controls uridylylation state and activity of the PII proteins, and plays an important role in the regulation of nitrogen assimilation and metabolism. This Legionella pneumophila (strain Corby) protein is Bifunctional uridylyltransferase/uridylyl-removing enzyme.